Consider the following 1369-residue polypeptide: DNA-directed RNA polymerase subunit beta' (1369 aa).

The disordered stretch occupies residues 1 to 26 (MTSSSPKTRKSSTKSKAKRGSKSKKA). A compositionally biased stretch (basic residues) spans 7-24 (KTRKSSTKSKAKRGSKSK). Zn(2+) is bound by residues Cys-253, Cys-320, Cys-327, and Cys-330. The disordered stretch occupies residues 1294–1369 (TVDMPSSPVA…LQEEGLLSDE (76 aa)). The span at 1342-1351 (DDELSAEDQM) shows a compositional bias: acidic residues. The span at 1357–1369 (LEGLQEEGLLSDE) shows a compositional bias: low complexity.

It belongs to the RNA polymerase beta' chain family. RpoC2 subfamily. In cyanobacteria the RNAP catalytic core is composed of 2 alpha, 1 beta, 1 beta', 1 gamma and 1 omega subunit. When a sigma factor is associated with the core the holoenzyme is formed, which can initiate transcription. Zn(2+) serves as cofactor.

The enzyme catalyses RNA(n) + a ribonucleoside 5'-triphosphate = RNA(n+1) + diphosphate. Functionally, DNA-dependent RNA polymerase catalyzes the transcription of DNA into RNA using the four ribonucleoside triphosphates as substrates. In Prochlorococcus marinus (strain NATL2A), this protein is DNA-directed RNA polymerase subunit beta'.